Here is a 431-residue protein sequence, read N- to C-terminus: Serine--tRNA ligase (431 aa).

The interval 41–66 (QSRTQELQAERNARSKSIGEAARRGE) is disordered. 240–242 (TSE) contributes to the L-serine binding site. Residue 271 to 273 (RSE) participates in ATP binding. An L-serine-binding site is contributed by Glu-294. ATP is bound at residue 358 to 361 (EISS). Residue Ser-392 coordinates L-serine.

It belongs to the class-II aminoacyl-tRNA synthetase family. Type-1 seryl-tRNA synthetase subfamily. In terms of assembly, homodimer. The tRNA molecule binds across the dimer.

It localises to the cytoplasm. It carries out the reaction tRNA(Ser) + L-serine + ATP = L-seryl-tRNA(Ser) + AMP + diphosphate + H(+). The catalysed reaction is tRNA(Sec) + L-serine + ATP = L-seryl-tRNA(Sec) + AMP + diphosphate + H(+). The protein operates within aminoacyl-tRNA biosynthesis; selenocysteinyl-tRNA(Sec) biosynthesis; L-seryl-tRNA(Sec) from L-serine and tRNA(Sec): step 1/1. Catalyzes the attachment of serine to tRNA(Ser). Is also able to aminoacylate tRNA(Sec) with serine, to form the misacylated tRNA L-seryl-tRNA(Sec), which will be further converted into selenocysteinyl-tRNA(Sec). The sequence is that of Serine--tRNA ligase from Aeromonas salmonicida (strain A449).